The following is a 477-amino-acid chain: MGRTVVVLGGGISGLAASYHLSRAPCPPKVVLVESSERLGGWIRSVRGPNGAIFELGPRGIRPAGALGARTLLLVSELGLDSEVLPVRGDHPAAQNRFLYVGGALHALPTGLRGLLRPSPPFSKPLFWAGLRELTKPRGKEPDETVHSFAQRRLGPEVASLAMDSLCRGVFAGNSRELSIRSCFPSLFQAEQTHRSILLGLLLGAGRTPQPDSALIRQALAERWSQWSLRGGLEMLPQALETHLTSRGVSVLRGQPVCGLSLQAEGRWKVSLRDSSLEADHVISAIPASVLSELLPAEAAPLARALSAITAVSVAVVNLQYQGAHLPVQGFGHLVPSSEDPGVLGIVYDSVAFPEQDGSPPGLRVTVMLGGSWLQTLEASGCVLSQELFQQRAQEAAATQLGLKEMPSHCLVHLHKNCIPQYTLGHWQKLESARQFLTAHRLPLTLAGASYEGVAVNDCIESGRQAAVSVLGTEPNS.

Residues 9 to 14 (GGGISG), 34 to 35 (ES), Trp-42, 57 to 60 (GPRG), Val-257, Ala-449, and 454 to 456 (VAV) contribute to the FAD site.

It belongs to the protoporphyrinogen/coproporphyrinogen oxidase family. Protoporphyrinogen oxidase subfamily. Monomer. Homodimer. It depends on FAD as a cofactor. Expressed in heart, brain, placenta, lung, liver, skeletal muscle, kidney and pancreas.

Its subcellular location is the mitochondrion inner membrane. It catalyses the reaction protoporphyrinogen IX + 3 O2 = protoporphyrin IX + 3 H2O2. The protein operates within porphyrin-containing compound metabolism; protoporphyrin-IX biosynthesis; protoporphyrin-IX from protoporphyrinogen-IX: step 1/1. Functionally, catalyzes the 6-electron oxidation of protoporphyrinogen-IX to form protoporphyrin-IX. This Homo sapiens (Human) protein is Protoporphyrinogen oxidase (PPOX).